Here is a 257-residue protein sequence, read N- to C-terminus: Acetylglutamate kinase (257 aa).

Substrate-binding positions include 41–42, R63, and N156; that span reads GG.

Belongs to the acetylglutamate kinase family. ArgB subfamily.

The protein localises to the cytoplasm. The catalysed reaction is N-acetyl-L-glutamate + ATP = N-acetyl-L-glutamyl 5-phosphate + ADP. It functions in the pathway amino-acid biosynthesis; L-arginine biosynthesis; N(2)-acetyl-L-ornithine from L-glutamate: step 2/4. Catalyzes the ATP-dependent phosphorylation of N-acetyl-L-glutamate. This is Acetylglutamate kinase from Geobacillus sp. (strain WCH70).